Consider the following 315-residue polypeptide: Fructose-1,6-bisphosphatase class 1 (315 aa).

Mg(2+) contacts are provided by Glu-90, Asp-111, Leu-113, and Asp-114. Residues 114-117 (DGSS), Tyr-222, and Lys-253 each bind substrate. Mg(2+) is bound at residue Glu-259.

Belongs to the FBPase class 1 family. In terms of assembly, homotetramer. The cofactor is Mg(2+).

It localises to the cytoplasm. It carries out the reaction beta-D-fructose 1,6-bisphosphate + H2O = beta-D-fructose 6-phosphate + phosphate. The protein operates within carbohydrate biosynthesis; gluconeogenesis. In Trichlorobacter lovleyi (strain ATCC BAA-1151 / DSM 17278 / SZ) (Geobacter lovleyi), this protein is Fructose-1,6-bisphosphatase class 1.